The primary structure comprises 211 residues: UPF0329 protein ECU07_1880/ECU10_0020 (211 aa).

This sequence belongs to the UPF0329 family.

The sequence is that of UPF0329 protein ECU07_1880/ECU10_0020 from Encephalitozoon cuniculi (strain GB-M1) (Microsporidian parasite).